Consider the following 865-residue polypeptide: Nicotinate catabolism cluster-specific transcription factor (865 aa).

2 consecutive C2H2-type zinc fingers follow at residues 8-32 (HACT…SLNH) and 41-63 (YTCQ…LDRH). The segment at 74 to 168 (GKGVLETRKR…SIDDDGTDPD (95 aa)) is disordered. Residues 77 to 87 (VLETRKRMRRA) carry the Nuclear localization signal(NLS) motif. Over residues 78–89 (LETRKRMRRAED) the composition is skewed to basic and acidic residues. The segment covering 96–105 (PPKRPSRHQQ) has biased composition (basic residues). Positions 108–132 (GPPVGAPLSSSGSVSAGSGRSSRSP) are enriched in low complexity. A Nuclear export signal (NES) motif is present at residues 285–289 (LDIDL).

The protein localises to the nucleus. Transcription factor that specifically regulates the expression of the hxn gene cluster that mediates the degradation of nicotinate and related metabolites. This Emericella nidulans (strain FGSC A4 / ATCC 38163 / CBS 112.46 / NRRL 194 / M139) (Aspergillus nidulans) protein is Nicotinate catabolism cluster-specific transcription factor.